The primary structure comprises 565 residues: DNA-directed RNA polymerase subunit beta C-terminal section (565 aa).

This sequence belongs to the RNA polymerase beta chain family. As to quaternary structure, in plastids the minimal PEP RNA polymerase catalytic core is composed of four subunits: alpha, beta, beta', and beta''. When a (nuclear-encoded) sigma factor is associated with the core the holoenzyme is formed, which can initiate transcription.

It localises to the plastid. The protein localises to the chloroplast. The catalysed reaction is RNA(n) + a ribonucleoside 5'-triphosphate = RNA(n+1) + diphosphate. Functionally, DNA-dependent RNA polymerase catalyzes the transcription of DNA into RNA using the four ribonucleoside triphosphates as substrates. The polypeptide is DNA-directed RNA polymerase subunit beta C-terminal section (rpoB2) (Tetradesmus obliquus (Green alga)).